Reading from the N-terminus, the 91-residue chain is Sec-independent protein translocase protein TatA (91 aa).

Residues 1–21 (MGIFDWKHWIVILIVVVLVFG) form a helical membrane-spanning segment. Residues 42-91 (AMNDDDKPAEQPAPQPQQAQAAPQGSPLNQPHTIDAQAHKVDEPIRKDQV) are disordered. Positions 51–65 (EQPAPQPQQAQAAPQ) are enriched in low complexity. Residues 78 to 91 (QAHKVDEPIRKDQV) are compositionally biased toward basic and acidic residues.

The protein belongs to the TatA/E family. In terms of assembly, the Tat system comprises two distinct complexes: a TatABC complex, containing multiple copies of TatA, TatB and TatC subunits, and a separate TatA complex, containing only TatA subunits. Substrates initially bind to the TatABC complex, which probably triggers association of the separate TatA complex to form the active translocon.

The protein resides in the cell inner membrane. Its function is as follows. Part of the twin-arginine translocation (Tat) system that transports large folded proteins containing a characteristic twin-arginine motif in their signal peptide across membranes. TatA could form the protein-conducting channel of the Tat system. The sequence is that of Sec-independent protein translocase protein TatA from Pseudomonas savastanoi pv. phaseolicola (strain 1448A / Race 6) (Pseudomonas syringae pv. phaseolicola (strain 1448A / Race 6)).